The sequence spans 415 residues: uncharacterized protein (415 aa).

The TRAM domain maps to 1–52; sequence MQDLTINAIGAQGDGLARTADGKPAFVPLTLPGEVVRAKMDGARGEVVEILA. Cys62, Cys68, Cys71, and Cys147 together coordinate [4Fe-4S] cluster. S-adenosyl-L-methionine-binding residues include Gln252, Tyr279, Glu299, and Asp347. Cys373 acts as the Nucleophile in catalysis.

This sequence belongs to the class I-like SAM-binding methyltransferase superfamily. RNA M5U methyltransferase family.

This is an uncharacterized protein from Caulobacter vibrioides (strain ATCC 19089 / CIP 103742 / CB 15) (Caulobacter crescentus).